Here is a 240-residue protein sequence, read N- to C-terminus: Sugar fermentation stimulation protein homolog (240 aa).

The protein belongs to the SfsA family.

This chain is Sugar fermentation stimulation protein homolog, found in Pasteurella multocida (strain Pm70).